A 313-amino-acid polypeptide reads, in one-letter code: Ankyrin repeat family A protein 2 (313 aa).

5 ANK repeats span residues 148–180 (ANSL…HTDE), 181–213 (EGFT…LLGK), 214–246 (GRES…EYDW), 247–279 (NGGT…IETD), and 280–313 (SGYN…NIKE).

Interacts (via ANK repeats) with CCDC8 (via PxLPxI/L motif); mediates the interaction with the 3M complex which is composed of CCDC8, CUL7 and OBSL1. Interacts (via ANK repeats) with HDAC4 (via PxLPxI/L motif). Interacts (via ANK repeats) with HDAC5 (via PxLPxI/L motif). Interacts (via ANK repeats) with LRP2/megalin (via PxLPxI/L motif). Interacts (via ANK repeats) with RFX7 (via PxLPxI/L motif). Interacts with AHRR. Interacts with NEK6.

The protein localises to the cytoplasm. Its subcellular location is the cytoskeleton. It localises to the membrane. In terms of biological role, may regulate the interaction between the 3M complex and the histone deacetylases HDAC4 and HDAC5. May also regulate LRP2/megalin. This chain is Ankyrin repeat family A protein 2 (ANKRA2), found in Bos taurus (Bovine).